The following is a 50-amino-acid chain: Protein hunchback (50 aa).

C2H2-type zinc fingers lie at residues 1–5 (HLRNH), 11–33 (FKCGKCNYSCANKSMLNSHMKSH), and 39–50 (YRCANCCYATKY).

Belongs to the hunchback C2H2-type zinc-finger protein family.

It localises to the nucleus. Its function is as follows. Gap class segmentation protein that controls development of head structures. This chain is Protein hunchback (hb), found in Pholcus phalangioides (Longbodied cellar spider).